Reading from the N-terminus, the 240-residue chain is Aliphatic sulfonates import ATP-binding protein SsuB 2 (240 aa).

Positions 2 to 218 (VRTRELRRGF…RHSAPEFIHA (217 aa)) constitute an ABC transporter domain. ATP is bound at residue 34–41 (GRSGSGKS).

Belongs to the ABC transporter superfamily. Aliphatic sulfonates importer (TC 3.A.1.17.2) family. The complex is composed of two ATP-binding proteins (SsuB), two transmembrane proteins (SsuC) and a solute-binding protein (SsuA).

The protein resides in the cell membrane. The catalysed reaction is ATP + H2O + aliphatic sulfonate-[sulfonate-binding protein]Side 1 = ADP + phosphate + aliphatic sulfonateSide 2 + [sulfonate-binding protein]Side 1.. Its function is as follows. Part of the ABC transporter complex SsuABC involved in aliphatic sulfonates import. Responsible for energy coupling to the transport system. This Nocardia farcinica (strain IFM 10152) protein is Aliphatic sulfonates import ATP-binding protein SsuB 2.